Consider the following 155-residue polypeptide: Isotocin-neurophysin IT 1 (155 aa).

Residues 1–19 (MTGTAISVCLLFLLSVCSA) form the signal peptide. The cysteines at positions 20 and 25 are disulfide-linked. Gly-28 is modified (glycine amide). Intrachain disulfides connect Cys-41-Cys-85, Cys-44-Cys-58, Cys-52-Cys-75, Cys-59-Cys-65, Cys-92-Cys-105, Cys-99-Cys-117, and Cys-106-Cys-111.

This sequence belongs to the vasopressin/oxytocin family. In terms of processing, seven disulfide bonds are present in neurophysin.

Functionally, isotocin causes contraction of smooth muscles. This is Isotocin-neurophysin IT 1 from Takifugu rubripes (Japanese pufferfish).